We begin with the raw amino-acid sequence, 197 residues long: FMN-dependent NADH:quinone oxidoreductase (197 aa).

FMN is bound by residues Ser-10 and 16-18; that span reads SIS.

Belongs to the azoreductase type 1 family. Homodimer. It depends on FMN as a cofactor.

The catalysed reaction is 2 a quinone + NADH + H(+) = 2 a 1,4-benzosemiquinone + NAD(+). It carries out the reaction N,N-dimethyl-1,4-phenylenediamine + anthranilate + 2 NAD(+) = 2-(4-dimethylaminophenyl)diazenylbenzoate + 2 NADH + 2 H(+). Its function is as follows. Quinone reductase that provides resistance to thiol-specific stress caused by electrophilic quinones. In terms of biological role, also exhibits azoreductase activity. Catalyzes the reductive cleavage of the azo bond in aromatic azo compounds to the corresponding amines. The polypeptide is FMN-dependent NADH:quinone oxidoreductase (Erythrobacter litoralis (strain HTCC2594)).